The following is a 202-amino-acid chain: uncharacterized protein (202 aa).

Residues 164 to 202 (DTDSEQESDQESDQDSDQESEESDQESDQDSDQDSEGSE) are disordered. The segment covering 165–202 (TDSEQESDQESDQDSDQESEESDQESDQDSDQDSEGSE) has biased composition (acidic residues).

This is an uncharacterized protein from Acanthamoeba polyphaga mimivirus (APMV).